The sequence spans 375 residues: tRNA-specific 2-thiouridylase MnmA (375 aa).

Residues 8–15 (GLSGGVDS) and Met-34 each bind ATP. An interaction with target base in tRNA region spans residues 104 to 106 (NPD). The active-site Nucleophile is the Cys-109. Cysteines 109 and 205 form a disulfide. Gly-133 is an ATP binding site. The segment at 155 to 157 (KDQ) is interaction with tRNA. Cys-205 functions as the Cysteine persulfide intermediate in the catalytic mechanism. The tract at residues 313–314 (RY) is interaction with tRNA.

This sequence belongs to the MnmA/TRMU family.

It localises to the cytoplasm. It catalyses the reaction S-sulfanyl-L-cysteinyl-[protein] + uridine(34) in tRNA + AH2 + ATP = 2-thiouridine(34) in tRNA + L-cysteinyl-[protein] + A + AMP + diphosphate + H(+). Functionally, catalyzes the 2-thiolation of uridine at the wobble position (U34) of tRNA, leading to the formation of s(2)U34. This chain is tRNA-specific 2-thiouridylase MnmA, found in Acholeplasma laidlawii (strain PG-8A).